The sequence spans 133 residues: Helix-loop-helix protein 1 (133 aa).

The segment at methionine 1–alanine 79 is disordered. Gly residues predominate over residues aspartate 25–alanine 45. Over residues glutamate 52–glutamate 65 the composition is skewed to basic and acidic residues. Residues arginine 66–alanine 79 are compositionally biased toward basic residues. The 53-residue stretch at lysine 75–leucine 127 folds into the bHLH domain.

As to quaternary structure, efficient DNA binding requires dimerization with another bHLH protein.

It is found in the nucleus. May serve as DNA-binding protein and may be involved in the control of cell-type determination, possibly within the developing nervous system. This is Helix-loop-helix protein 1 (NHLH1) from Homo sapiens (Human).